The chain runs to 368 residues: 3-dehydroquinate synthase (368 aa).

NAD(+) contacts are provided by residues 69 to 74 (DGEAYK), 103 to 107 (GVIGD), 127 to 128 (TT), K140, and K149. Zn(2+) contacts are provided by E182, H245, and H262.

The protein belongs to the sugar phosphate cyclases superfamily. Dehydroquinate synthase family. Requires Co(2+) as cofactor. The cofactor is Zn(2+). It depends on NAD(+) as a cofactor.

The protein localises to the cytoplasm. The enzyme catalyses 7-phospho-2-dehydro-3-deoxy-D-arabino-heptonate = 3-dehydroquinate + phosphate. The protein operates within metabolic intermediate biosynthesis; chorismate biosynthesis; chorismate from D-erythrose 4-phosphate and phosphoenolpyruvate: step 2/7. Functionally, catalyzes the conversion of 3-deoxy-D-arabino-heptulosonate 7-phosphate (DAHP) to dehydroquinate (DHQ). This is 3-dehydroquinate synthase from Pseudomonas aeruginosa (strain UCBPP-PA14).